Here is a 192-residue protein sequence, read N- to C-terminus: Xanthine phosphoribosyltransferase (192 aa).

Xanthine contacts are provided by Leu-20 and Asn-27. Residue 128–132 (ANGQA) participates in 5-phospho-alpha-D-ribose 1-diphosphate binding. Lys-156 contacts xanthine.

Belongs to the purine/pyrimidine phosphoribosyltransferase family. Xpt subfamily. In terms of assembly, homodimer.

It localises to the cytoplasm. The enzyme catalyses XMP + diphosphate = xanthine + 5-phospho-alpha-D-ribose 1-diphosphate. It participates in purine metabolism; XMP biosynthesis via salvage pathway; XMP from xanthine: step 1/1. Converts the preformed base xanthine, a product of nucleic acid breakdown, to xanthosine 5'-monophosphate (XMP), so it can be reused for RNA or DNA synthesis. The protein is Xanthine phosphoribosyltransferase of Listeria monocytogenes serotype 4b (strain F2365).